The sequence spans 85 residues: Large ribosomal subunit protein bL27 (85 aa).

The interval 1 to 21 (MAHKKAGGSTRNGRDSESKRL) is disordered.

Belongs to the bacterial ribosomal protein bL27 family.

This is Large ribosomal subunit protein bL27 from Pseudomonas entomophila (strain L48).